Here is a 633-residue protein sequence, read N- to C-terminus: Extracellular metalloproteinase 3 (633 aa).

The first 18 residues, 1-18 (MHGLLLAGLLALPMNVLA), serve as a signal peptide directing secretion. Positions 19–246 (HPAEQQTSSV…VHNVVDYVAS (228 aa)) are excised as a propeptide. The N-linked (GlcNAc...) asparagine glycan is linked to Asn-410. His-429 is a Zn(2+) binding site. Glu-430 is a catalytic residue. His-433 is a binding site for Zn(2+). Asn-480 carries an N-linked (GlcNAc...) asparagine glycan.

The protein belongs to the peptidase M36 family. Zn(2+) serves as cofactor.

It localises to the secreted. Secreted metalloproteinase probably acting as a virulence factor. This Arthroderma otae (Microsporum canis) protein is Extracellular metalloproteinase 3 (MEP3).